The following is a 209-amino-acid chain: Orotate phosphoribosyltransferase (209 aa).

5-phospho-alpha-D-ribose 1-diphosphate is bound by residues R96, K100, H102, and 122 to 130 (EDLISTGGS). S126 is an orotate binding site.

It belongs to the purine/pyrimidine phosphoribosyltransferase family. PyrE subfamily. In terms of assembly, homodimer. It depends on Mg(2+) as a cofactor.

It carries out the reaction orotidine 5'-phosphate + diphosphate = orotate + 5-phospho-alpha-D-ribose 1-diphosphate. The protein operates within pyrimidine metabolism; UMP biosynthesis via de novo pathway; UMP from orotate: step 1/2. Functionally, catalyzes the transfer of a ribosyl phosphate group from 5-phosphoribose 1-diphosphate to orotate, leading to the formation of orotidine monophosphate (OMP). The sequence is that of Orotate phosphoribosyltransferase from Lactococcus lactis subsp. cremoris (strain SK11).